We begin with the raw amino-acid sequence, 744 residues long: Zinc finger protein 366 (744 aa).

Residues 206–228 form a disordered region; the sequence is KQPPEPLLPRKAEPQESEETKQK. Positions 213 to 228 are enriched in basic and acidic residues; the sequence is LPRKAEPQESEETKQK. 11 consecutive C2H2-type zinc fingers follow at residues 253 to 275, 281 to 303, 309 to 331, 337 to 359, 365 to 387, 393 to 415, 421 to 443, 449 to 471, 477 to 499, 505 to 527, and 533 to 556; these read WQCP…ILGH, HACT…MLTH, HKCQ…MMQH, HNCR…EAKH, NICV…LTTH, YNCS…MMKH, YICS…SLTH, HKCG…VLIH, YQCH…MIVH, FKCK…MHLH, and FKCL…KVKH. The interval 455-744 is interaction with NRIP1; it reads GREFTLLANM…MEKQAVLLGI (290 aa). Positions 590–594 match the PXDLS motif; sequence PFDLS. 2 disordered regions span residues 603-627 and 664-692; these read VFQS…NCYE and KEEK…QERD.

In terms of assembly, interacts with ESR1 and NRIP1. Interacts (via PXDLS motif) with CTBP1. Expressed in immature and mature dendritic cells (DCs). Not detected in other blood cell types.

The protein resides in the nucleus. Functionally, has transcriptional repression activity. Acts as a corepressor of ESR1; the function seems to involve CTBP1 and histone deacetylases. This Homo sapiens (Human) protein is Zinc finger protein 366.